Reading from the N-terminus, the 1337-residue chain is Nucleoporin POM152 (1337 aa).

A disordered region spans residues 1 to 48; it reads MEHRYNVFNDTPRGNHWMGSSVSGSPRPSYSSRPNVNTTRRFQYSDDE. The Cytoplasmic portion of the chain corresponds to 1 to 110; sequence MEHRYNVFND…TDVLEISKQR (110 aa). Positions 1-175 are pore side; that stretch reads MEHRYNVFND…SFNIPRLTFK (175 aa). A compositionally biased stretch (low complexity) spans 19–37; it reads GSSVSGSPRPSYSSRPNVN. Ser45 and Ser60 each carry phosphoserine. Residues 111 to 131 form a helical membrane-spanning segment; the sequence is TFAVILFLIIQCYKIYDLVIL. Residues 132 to 148 are Perinuclear space-facing; the sequence is KSGLPLSGLLFKNYRFN. A helical transmembrane segment spans residues 149–169; that stretch reads FISKYFIIDSFFLYVLPSFNI. Over 170-172 the chain is Cytoplasmic; that stretch reads PRL. Residues 173–193 traverse the membrane as a helical segment; it reads TFKPWVVYLQILAMLLLNIFI. Topologically, residues 194–1337 are perinuclear space; that stretch reads SSDHEFVLIS…FAKNDLFFNN (1144 aa). Positions 196–1337 are cisternal side; that stretch reads DHEFVLISLI…FAKNDLFFNN (1142 aa). A glycan (N-linked (GlcNAc...) asparagine) is linked at Asn280. 8 repeat units span residues 390-413, 626-650, 732-755, 836-859, 943-966, 1058-1077, 1157-1178, and 1253-1276. Positions 390-1276 are 8 X 24 AA approximate repeats; sequence DRCIGDSDNV…EGTPPFSLTY (887 aa).

In terms of assembly, component of the nuclear pore complex (NPC). NPC constitutes the exclusive means of nucleocytoplasmic transport. NPCs allow the passive diffusion of ions and small molecules and the active, nuclear transport receptor-mediated bidirectional transport of macromolecules such as proteins, RNAs, ribonucleoparticles (RNPs), and ribosomal subunits across the nuclear envelope. Due to its 8-fold rotational symmetry, all subunits are present with 8 copies or multiples thereof. Interacts with NUP188. In terms of processing, the N-terminus is blocked. Phosphorylated by CDC28.

The protein localises to the nucleus. It localises to the nuclear pore complex. It is found in the nucleus membrane. Functionally, functions as a component of the nuclear pore complex (NPC). NPC components, collectively referred to as nucleoporins (NUPs), can play the role of both NPC structural components and of docking or interaction partners for transiently associated nuclear transport factors. POM152 is important for the de novo assembly of NPCs. The chain is Nucleoporin POM152 (POM152) from Saccharomyces cerevisiae (strain ATCC 204508 / S288c) (Baker's yeast).